Here is a 299-residue protein sequence, read N- to C-terminus: Protease HtpX homolog (299 aa).

Helical transmembrane passes span 15-35 and 39-59; these read ILLL…GYLF and GLGG…SMIF. H143 is a Zn(2+) binding site. E144 is a catalytic residue. H147 contributes to the Zn(2+) binding site. A run of 2 helical transmembrane segments spans residues 158-178 and 198-218; these read IAVA…RMMW and IIML…ATLV. Residue E227 coordinates Zn(2+).

This sequence belongs to the peptidase M48B family. Zn(2+) serves as cofactor.

Its subcellular location is the cell membrane. In Streptococcus pneumoniae (strain Hungary19A-6), this protein is Protease HtpX homolog.